A 326-amino-acid chain; its full sequence is Vomeronasal type-1 receptor 100 (326 aa).

Topologically, residues 1-32 are extracellular; that stretch reads MSEFPFFSPQPLFSYMMNKNSRVHTDSNIRNT. A helical transmembrane segment spans residues 33 to 53; it reads FFTEIGIGILANSFLLLFHIF. At 54-70 the chain is on the cytoplasmic side; that stretch reads KFIRGQRSRLTDLPIGL. A helical membrane pass occupies residues 71–91; it reads LSLIHLLMLLMGAFIAIDIFI. Residues 92–104 lie on the Extracellular side of the membrane; sequence SWRGWDDIICKFL. Cysteines 101 and 188 form a disulfide. A helical transmembrane segment spans residues 105–127; it reads VYLYRSFRGLSLCTTCMLSVLQA. The Cytoplasmic segment spans residues 128-149; the sequence is ITLSPRSSCLAKFKHKSPHHVS. The chain crosses the membrane as a helical span at residues 150–170; it reads CAIISLSILYMFISSHLLVSI. Topologically, residues 171 to 209 are extracellular; sequence NATPNLTTNNFMQVTQSCYIIPLSYLMQSMFSTLLAIRD. Residue Asn-175 is glycosylated (N-linked (GlcNAc...) asparagine). The chain crosses the membrane as a helical span at residues 210–230; sequence ISLISLMVLSTCYMVVLLCRH. Topologically, residues 231 to 254 are cytoplasmic; it reads RNQIQHLQGTNLSPKASPEQRATQ. Residues 255 to 275 form a helical membrane-spanning segment; it reads TILMLMTFFVLMSIFDSIVSC. Residues 276-285 are Extracellular-facing; that stretch reads SRTMYLNDPT. Residues 286-306 traverse the membrane as a helical segment; sequence SYYIQIFVVYIYATVSPFVFM. The Cytoplasmic portion of the chain corresponds to 307-326; that stretch reads STEKHIVNFLKSMCVRVKNV.

The protein belongs to the G-protein coupled receptor 1 family. In terms of tissue distribution, expressed in 1-4% of neurons of the vomeronasal organ. Only one pheromone receptor gene may be expressed in a particular neuron. Not expressed in the main olfactory epithelium.

Its subcellular location is the cell membrane. Its function is as follows. Putative pheromone receptor implicated in the regulation of social as well as reproductive behavior. This chain is Vomeronasal type-1 receptor 100 (Vom1r100), found in Rattus norvegicus (Rat).